The sequence spans 223 residues: Deoxyribose-phosphate aldolase (223 aa).

Residue Asp-91 is the Proton donor/acceptor of the active site. Lys-153 serves as the catalytic Schiff-base intermediate with acetaldehyde. Residue Lys-182 is the Proton donor/acceptor of the active site.

Belongs to the DeoC/FbaB aldolase family. DeoC type 1 subfamily.

The protein resides in the cytoplasm. It carries out the reaction 2-deoxy-D-ribose 5-phosphate = D-glyceraldehyde 3-phosphate + acetaldehyde. It participates in carbohydrate degradation; 2-deoxy-D-ribose 1-phosphate degradation; D-glyceraldehyde 3-phosphate and acetaldehyde from 2-deoxy-alpha-D-ribose 1-phosphate: step 2/2. Its function is as follows. Catalyzes a reversible aldol reaction between acetaldehyde and D-glyceraldehyde 3-phosphate to generate 2-deoxy-D-ribose 5-phosphate. This is Deoxyribose-phosphate aldolase from Streptococcus pyogenes serotype M4 (strain MGAS10750).